The sequence spans 120 residues: U-scoloptoxin(20)-Cw1a (120 aa).

The N-terminal stretch at 1-26 is a signal peptide; sequence MNSTDRLLGVLLAVVALILLIRISEA. Positions 87-106 are disordered; sequence SSGKSLTTTKDSSESRKKEI. Basic and acidic residues predominate over residues 97-106; the sequence is DSSESRKKEI.

This sequence belongs to the scoloptoxin-20 family. Contains 3 disulfide bonds. In terms of tissue distribution, expressed by the venom gland.

It is found in the secreted. The protein is U-scoloptoxin(20)-Cw1a of Cormocephalus westwoodi (Westwood's green centipede).